Consider the following 791-residue polypeptide: MKTKSKKLKSDLSIGEFEDIFQEIPEQLPVVVISEIMPIPNVDFRIEVSDNSYLKALKESETNANSFVILLTQKGLSHNKPKLTNLQRYGVLAQIITKVKIPHGDFKVRFRILQRVKIDKFLQKEPFLKVSYEKVKTVYGSIEEEKALIKLVIEKIMDKPFQLLVQNTNNFLDIIKTEPETENITDIIIFNLKIDDLDKYKYLKESHLNKRIFYILQDIQSLLIGLDLEQKINEKVKQSIDENQKEFYLREKMKAIQLELGDKAKKEEEIAELRDKIKKTPLPPEIKKKALQELSRYQTSSLMAESFVIKNYLDFLLELPWGKTSQDENDLVAIEKSLNNQHYGLQKVKERILEYAAVKIMTKKNPQNILCLVGPPGVGKTSLASSIAKALGRQFVRQSLGGLKEESEIRGHRRTYIGAMPGRILAGIRDAKTVNPVFLLDEIDKLVTNYNFDPASALLEVLDPQQNINFMDHFLSEPFDLSQVLFIATANYLDNVPEALKDRMEIIEVSSYTEKDKINIASKYLLKKQLKNHGITDTNLVIDNDTILYLIRHYTKEAGVRELDRILAELARKTVKECLIKKKEQVIITTKNVTKYLGKEKYLNLLDEQKEKIGSTNGLAYTYFGGDLLPVEVTYYKGKGQLVLTGKLGEVLKESAYTALSFIKANCQNLGIDANIFAENDFHIHLPEAAIPKDGPSAGITIATSLVSAITQKYIKKGLGMTGEITLRGNILAIGGLKEKAIAANRSGLDTIFIPQENLKDIEDIPEEVRNKLNIIPVSNISDVFSQVFVV.

The Lon N-terminal domain occupies 28 to 223 (LPVVVISEIM…YILQDIQSLL (196 aa)). An ATP-binding site is contributed by 374 to 381 (GPPGVGKT). One can recognise a Lon proteolytic domain in the interval 610 to 791 (KEKIGSTNGL…SDVFSQVFVV (182 aa)). Active-site residues include serine 697 and lysine 740.

This sequence belongs to the peptidase S16 family. Homohexamer. Organized in a ring with a central cavity.

Its subcellular location is the cytoplasm. It catalyses the reaction Hydrolysis of proteins in presence of ATP.. Its function is as follows. ATP-dependent serine protease that mediates the selective degradation of mutant and abnormal proteins as well as certain short-lived regulatory proteins. Required for cellular homeostasis and for survival from DNA damage and developmental changes induced by stress. Degrades polypeptides processively to yield small peptide fragments that are 5 to 10 amino acids long. Binds to DNA in a double-stranded, site-specific manner. The chain is Lon protease from Aster yellows witches'-broom phytoplasma (strain AYWB).